Here is a 664-residue protein sequence, read N- to C-terminus: Alcohol oxidase (664 aa).

8 to 39 (DIIVVGGGSTGCCIAGRLANLDDQNLTVALIE) serves as a coordination point for FAD. Histidine 568 (proton acceptor) is an active-site residue. Positions 662-664 (ARF) match the Microbody targeting signal motif.

This sequence belongs to the GMC oxidoreductase family. In terms of assembly, homooctamer. The cofactor is FAD.

It localises to the peroxisome matrix. It carries out the reaction a primary alcohol + O2 = an aldehyde + H2O2. It participates in energy metabolism; methane degradation. Functionally, catalyzes the oxidation of methanol to formaldehyde and hydrogen peroxide, the first step in the methanol utilization pathway of methylotrophic yeasts. This Pichia angusta (Yeast) protein is Alcohol oxidase (MOX).